The chain runs to 300 residues: Recombination-associated protein RdgC (300 aa).

This sequence belongs to the RdgC family.

It localises to the cytoplasm. It is found in the nucleoid. Its function is as follows. May be involved in recombination. This chain is Recombination-associated protein RdgC, found in Janthinobacterium sp. (strain Marseille) (Minibacterium massiliensis).